Here is a 443-residue protein sequence, read N- to C-terminus: MTTHNICALITEFPLVKRLIDLEEVVWFNPNITTLEEGLPYVGLGAANIKDASERLKRFAPYLMKAFPETAASNGIIESNVVEIDKMKSCLEAQYGTQILGRLMLKKDSHLPISGSIKARGGIYEVLTHAERLAIEAGLLNESDDYSKLFSEEFRQFFQQYSIAVSSTGNLGMSIGIMSAKLGFSVSVHMSSDAREWKKNKLRSHGVNVVEYEQDYGVAVEQGRKEAEKDPTCFFIDDENSQTLFLGYSVAGERLKQQFDDMGIIVDAEHPLFVYLPCGVGGGPGGVAFGLKMAFGDHVHCIFAEPTHSPCMLLGVHTGLHDDIAVQDLGIDNITAADGLAVGRASGFVGRAMERLLDGYYTITDERMYHHLGELSEQEDIRLEPSALAGMMGAVHVSQDQAYQARMQFSEDKMNNAIHLVWATGGGMVPEAEMSAYLAKSGR.

Lysine 118 is subject to N6-(pyridoxal phosphate)lysine.

Belongs to the serine/threonine dehydratase family. DsdA subfamily. Pyridoxal 5'-phosphate is required as a cofactor.

The catalysed reaction is D-serine = pyruvate + NH4(+). In Vibrio campbellii (strain ATCC BAA-1116), this protein is Probable D-serine dehydratase.